The following is a 408-amino-acid chain: Lysosomal phospholipase A and acyltransferase (408 aa).

Residues 1-31 (MGLRRGPCPAALLPGGFLFLLLLADPALLAG) form the signal peptide. Asp42 is a substrate binding site. Cys61 and Cys85 are disulfide-bonded. N-linked (GlcNAc...) asparagine glycosylation is present at Asn95. Ser194 serves as the catalytic Acyl-ester intermediate. Residue Ser194 participates in Zn(2+) binding. Substrate is bound at residue Met195. Residues Asn269 and Asn285 are each glycosylated (N-linked (GlcNAc...) asparagine). Zn(2+) is bound by residues Asp336 and Cys351. Residues Asp356 and His388 each act as charge relay system in the active site. His388 contributes to the Zn(2+) binding site. An N-linked (GlcNAc...) asparagine glycan is attached at Asn394.

It belongs to the AB hydrolase superfamily. Lipase family. In terms of processing, N-glycosylated. N-glycosylation is important for maturation of the enzyme and normal subcellular location.

The protein resides in the secreted. It localises to the lysosome. Its subcellular location is the membrane. It catalyses the reaction a 1,2-diacyl-sn-glycero-3-phosphocholine + H2O = a 2-acyl-sn-glycero-3-phosphocholine + a fatty acid + H(+). The enzyme catalyses 1-hexadecanoyl-2-(9Z-octadecenoyl)-sn-glycero-3-phosphocholine + H2O = 2-(9Z-octadecenoyl)-sn-glycero-3-phosphocholine + hexadecanoate + H(+). The catalysed reaction is 1,2-di-(9Z-octadecenoyl)-sn-glycero-3-phosphocholine + H2O = 2-(9Z-octadecenoyl)-sn-glycero-3-phosphocholine + (9Z)-octadecenoate + H(+). It carries out the reaction 1-hexadecanoyl-2-glutaroyl-sn-glycero-3-phosphocholine + H2O = 2-glutaroyl-sn-glycero-3-phosphocholine + hexadecanoate + H(+). It catalyses the reaction 1-hexadecanoyl-2-nonadioyl-sn-glycero-3-phosphocholine + H2O = 2-nonadioyl-sn-glycero-3-phosphocholine + hexadecanoate + H(+). The enzyme catalyses 1-hexadecanoyl-2-(5-oxopentanoyl)-sn-glycero-3-phosphocholine + H2O = 2-(5-oxopentanoyl)-sn-glycero-3-phosphocholine + hexadecanoate + H(+). The catalysed reaction is 1-hexadecanoyl-2-(9-oxononanoyl)-sn-glycero-3-phosphocholine + H2O = 2-(9-oxononanoyl)-sn-glycero-3-phosphocholine + hexadecanoate + H(+). It carries out the reaction 1,2-dihexadecanoyl-sn-glycero-3-phosphocholine + H2O = 2-hexadecanoyl-sn-glycero-3-phosphocholine + hexadecanoate + H(+). It catalyses the reaction a 1,2-diacyl-sn-glycero-3-phosphocholine + H2O = a 1-acyl-sn-glycero-3-phosphocholine + a fatty acid + H(+). The enzyme catalyses 1-hexadecanoyl-2-(9Z-octadecenoyl)-sn-glycero-3-phosphocholine + H2O = 1-hexadecanoyl-sn-glycero-3-phosphocholine + (9Z)-octadecenoate + H(+). The catalysed reaction is 1,2-di-(9Z-octadecenoyl)-sn-glycero-3-phosphocholine + H2O = 1-(9Z-octadecenoyl)-sn-glycero-3-phosphocholine + (9Z)-octadecenoate + H(+). It carries out the reaction 1,2-dihexadecanoyl-sn-glycero-3-phosphocholine + H2O = 1-hexadecanoyl-sn-glycero-3-phosphocholine + hexadecanoate + H(+). It catalyses the reaction a 1-acyl-sn-glycero-3-phosphocholine + H2O = sn-glycerol 3-phosphocholine + a fatty acid + H(+). The enzyme catalyses 1-hexadecanoyl-sn-glycero-3-phosphocholine + H2O = sn-glycerol 3-phosphocholine + hexadecanoate + H(+). The catalysed reaction is N-(acetyl)-sphing-4-enine + a 1,2-diacyl-sn-glycero-3-phosphoethanolamine = 1-O-acyl-N-(acetyl)-sphing-4-enine + a 2-acyl-sn-glycero-3-phosphoethanolamine. It carries out the reaction 1-hexadecanoyl-2-(9Z-octadecenoyl)-sn-glycero-3-phosphoethanolamine + N-(acetyl)-sphing-4-enine = 2-(9Z-octadecenoyl)-sn-glycero-3-phosphoethanolamine + 1-hexadecanoyl-N-(acetyl)-sphing-4-enine. It catalyses the reaction 1-hexadecanoyl-2-(9Z,12Z-octadecadienoyl)-sn-glycero-3-phosphoethanolamine + N-(acetyl)-sphing-4-enine = 2-(9Z,12Z)-octadecadienoyl-sn-glycero-3-phosphoethanolamine + 1-hexadecanoyl-N-(acetyl)-sphing-4-enine. The enzyme catalyses 1-hexadecanoyl-2-(5Z,8Z,11Z,14Z-eicosatetraenoyl)-sn-glycero-3-phosphoethanolamine + N-(acetyl)-sphing-4-enine = 2-(5Z,8Z,11Z,14Z)-eicosatetraenoyl-sn-glycero-3-phosphoethanolamine + 1-hexadecanoyl-N-(acetyl)-sphing-4-enine. The catalysed reaction is N-(acetyl)-sphing-4-enine + a 1,2-diacyl-sn-glycero-3-phosphoethanolamine = 1-O-acyl-N-(acetyl)-sphing-4-enine + a 1-acyl-sn-glycero-3-phosphoethanolamine. It carries out the reaction 1-hexadecanoyl-2-(9Z-octadecenoyl)-sn-glycero-3-phosphoethanolamine + N-(acetyl)-sphing-4-enine = 1-(9Z-octadecenoyl)-N-(acetyl)-sphing-4-enine + 1-hexadecanoyl-sn-glycero-3-phosphoethanolamine. It catalyses the reaction 1-hexadecanoyl-2-(9Z,12Z-octadecadienoyl)-sn-glycero-3-phosphoethanolamine + N-(acetyl)-sphing-4-enine = 1-(9Z,12Z-octadecadienoyl)-N-acetylsphing-4-enine + 1-hexadecanoyl-sn-glycero-3-phosphoethanolamine. The enzyme catalyses 1-hexadecanoyl-2-(5Z,8Z,11Z,14Z-eicosatetraenoyl)-sn-glycero-3-phosphoethanolamine + N-(acetyl)-sphing-4-enine = 1-(5Z,8Z,11Z,14Z)-eicosatetraenoyl-N-(acetyl)-sphing-4-enine + 1-hexadecanoyl-sn-glycero-3-phosphoethanolamine. The catalysed reaction is N-(acetyl)-sphing-4-enine + a 1,2-diacyl-sn-glycero-3-phosphocholine = 1-O-acyl-N-(acetyl)-sphing-4-enine + a 2-acyl-sn-glycero-3-phosphocholine. It carries out the reaction 1-hexadecanoyl-2-(9Z-octadecenoyl)-sn-glycero-3-phosphocholine + N-(acetyl)-sphing-4-enine = 1-hexadecanoyl-N-(acetyl)-sphing-4-enine + 2-(9Z-octadecenoyl)-sn-glycero-3-phosphocholine. It catalyses the reaction 1-hexadecanoyl-2-(9Z,12Z-octadecadienoyl)-sn-glycero-3-phosphocholine + N-(acetyl)-sphing-4-enine = 2-(9Z,12Z-octadecadienoyl)-sn-glycero-3-phosphocholine + 1-hexadecanoyl-N-(acetyl)-sphing-4-enine. The enzyme catalyses 1-hexadecanoyl-2-(5Z,8Z,11Z,14Z-eicosatetraenoyl)-sn-glycero-3-phosphocholine + N-(acetyl)-sphing-4-enine = 1-hexadecanoyl-N-(acetyl)-sphing-4-enine + 2-(5Z,8Z,11Z,14Z)-eicosatetraenoyl-sn-glycero-3-phosphocholine. The catalysed reaction is 1-hexadecanoyl-2-(4Z,7Z,10Z,13Z,16Z,19Z-docosahexaenoyl)-sn-glycero-3-phosphocholine + N-(acetyl)-sphing-4-enine = 2-(4Z,7Z,10Z,13Z,16Z,19Z-docosahexaenoyl)-sn-glycero-3-phosphocholine + 1-hexadecanoyl-N-(acetyl)-sphing-4-enine. It carries out the reaction 1-hexadecanoyl-2-nonadioyl-sn-glycero-3-phosphocholine + N-(acetyl)-sphing-4-enine = 2-nonadioyl-sn-glycero-3-phosphocholine + 1-hexadecanoyl-N-(acetyl)-sphing-4-enine. It catalyses the reaction 1-octadecanoyl-2-(9Z-octadecenoyl)-sn-glycero-3-phosphocholine + N-(acetyl)-sphing-4-enine = 1-octadecanoyl-N-(acetyl)-sphing-4-enine + 2-(9Z-octadecenoyl)-sn-glycero-3-phosphocholine. The enzyme catalyses 1-(9Z)-octadecenoyl-2-octadecanoyl-sn-glycero-3-phosphocholine + N-(acetyl)-sphing-4-enine = 2-octadecanoyl-sn-glycero-3-phosphocholine + 1-(9Z-octadecenoyl)-N-(acetyl)-sphing-4-enine. The catalysed reaction is 1-octadecanoyl-2-(5Z,8Z,11Z,14Z-eicosatetraenoyl)-sn-glycero-3-phosphocholine + N-(acetyl)-sphing-4-enine = 1-octadecanoyl-N-(acetyl)-sphing-4-enine + 2-(5Z,8Z,11Z,14Z)-eicosatetraenoyl-sn-glycero-3-phosphocholine. It carries out the reaction 1-(9Z-octadecenoyl)-2-hexadecanoyl-sn-glycero-3-phosphocholine + N-(acetyl)-sphing-4-enine = 1-(9Z-octadecenoyl)-N-(acetyl)-sphing-4-enine + 2-hexadecanoyl-sn-glycero-3-phosphocholine. It catalyses the reaction N-(acetyl)-sphing-4-enine + a 1,2-diacyl-sn-glycero-3-phosphocholine = 1-O-acyl-N-(acetyl)-sphing-4-enine + a 1-acyl-sn-glycero-3-phosphocholine. The enzyme catalyses 1-hexadecanoyl-2-(9Z-octadecenoyl)-sn-glycero-3-phosphocholine + N-(acetyl)-sphing-4-enine = 1-(9Z-octadecenoyl)-N-(acetyl)-sphing-4-enine + 1-hexadecanoyl-sn-glycero-3-phosphocholine. The catalysed reaction is 1-hexadecanoyl-2-(9Z,12Z-octadecadienoyl)-sn-glycero-3-phosphocholine + N-(acetyl)-sphing-4-enine = 1-(9Z,12Z-octadecadienoyl)-N-acetylsphing-4-enine + 1-hexadecanoyl-sn-glycero-3-phosphocholine. It carries out the reaction 1-hexadecanoyl-2-(5Z,8Z,11Z,14Z-eicosatetraenoyl)-sn-glycero-3-phosphocholine + N-(acetyl)-sphing-4-enine = 1-(5Z,8Z,11Z,14Z)-eicosatetraenoyl-N-(acetyl)-sphing-4-enine + 1-hexadecanoyl-sn-glycero-3-phosphocholine. It catalyses the reaction 1-hexadecanoyl-2-(4Z,7Z,10Z,13Z,16Z,19Z-docosahexaenoyl)-sn-glycero-3-phosphocholine + N-(acetyl)-sphing-4-enine = 1-(4Z,7Z,10Z,13Z,16Z,19Z-docosahexaenoyl)-N-(acetyl)-sphing-4-enine + 1-hexadecanoyl-sn-glycero-3-phosphocholine. The enzyme catalyses 1-octadecanoyl-2-(9Z-octadecenoyl)-sn-glycero-3-phosphocholine + N-(acetyl)-sphing-4-enine = 1-(9Z-octadecenoyl)-N-(acetyl)-sphing-4-enine + 1-octadecanoyl-sn-glycero-3-phosphocholine. The catalysed reaction is 1-octadecanoyl-2-(9Z,12Z)-octadecadienoyl-sn-glycero-3-phosphocholine + N-(acetyl)-sphing-4-enine = 1-(9Z,12Z-octadecadienoyl)-N-acetylsphing-4-enine + 1-octadecanoyl-sn-glycero-3-phosphocholine. It carries out the reaction 1-(9Z-octadecenoyl)-2-hexadecanoyl-sn-glycero-3-phosphocholine + N-(acetyl)-sphing-4-enine = 1-hexadecanoyl-N-(acetyl)-sphing-4-enine + 1-(9Z-octadecenoyl)-sn-glycero-3-phosphocholine. It catalyses the reaction 1-(9Z)-octadecenoyl-2-octadecanoyl-sn-glycero-3-phosphocholine + N-(acetyl)-sphing-4-enine = 1-octadecanoyl-N-(acetyl)-sphing-4-enine + 1-(9Z-octadecenoyl)-sn-glycero-3-phosphocholine. The enzyme catalyses 1,2-di-(9Z-octadecenoyl)-sn-glycero-3-phosphocholine + N-(acetyl)-sphing-4-enine = 1-(9Z-octadecenoyl)-N-(acetyl)-sphing-4-enine + 1-(9Z-octadecenoyl)-sn-glycero-3-phosphocholine. The catalysed reaction is 1-octadecanoyl-2-(5Z,8Z,11Z,14Z-eicosatetraenoyl)-sn-glycero-3-phosphocholine + N-(acetyl)-sphing-4-enine = 1-(5Z,8Z,11Z,14Z)-eicosatetraenoyl-N-(acetyl)-sphing-4-enine + 1-octadecanoyl-sn-glycero-3-phosphocholine. It carries out the reaction a 1,2-diacyl-sn-glycero-3-phospho-L-serine + N-(acetyl)-sphing-4-enine = a 2-acyl-sn-glycero-3-phospho-L-serine + 1-O-acyl-N-(acetyl)-sphing-4-enine. It catalyses the reaction 1-octadecanoyl-2-(9Z-octadecenoyl)-sn-glycero-3-phospho-L-serine + N-(acetyl)-sphing-4-enine = 2-(9Z-octadecenoyl)-sn-glycero-3-phospho-L-serine + 1-octadecanoyl-N-(acetyl)-sphing-4-enine. The enzyme catalyses a 1,2-diacyl-sn-glycero-3-phospho-L-serine + N-(acetyl)-sphing-4-enine = 1-O-acyl-N-(acetyl)-sphing-4-enine + a 1-acyl-sn-glycero-3-phospho-L-serine. The catalysed reaction is 1-octadecanoyl-2-(9Z-octadecenoyl)-sn-glycero-3-phospho-L-serine + N-(acetyl)-sphing-4-enine = 1-octadecanoyl-sn-glycero-3-phosphoserine + 1-(9Z-octadecenoyl)-N-(acetyl)-sphing-4-enine. It carries out the reaction a 1,2-diacyl-sn-glycero-3-phospho-(1'-sn-glycerol) + N-(acetyl)-sphing-4-enine = 2-acyl-sn-glycero-3-phospho-(1'-sn-glycerol) + 1-O-acyl-N-(acetyl)-sphing-4-enine. It catalyses the reaction 1-octadecanoyl-2-(9Z-octadecenoyl)-sn-glycero-3-phospho-(1'-sn-glycerol) + N-(acetyl)-sphing-4-enine = 2-(9Z-octadecenoyl)-sn-glycero-3-phospho-(1'-sn-glycerol) + 1-octadecanoyl-N-(acetyl)-sphing-4-enine. The enzyme catalyses a 1,2-diacyl-sn-glycero-3-phospho-(1'-sn-glycerol) + N-(acetyl)-sphing-4-enine = 1-O-acyl-N-(acetyl)-sphing-4-enine + 1-acyl-sn-glycero-3-phospho-(1'-sn-glycerol). The catalysed reaction is 1-octadecanoyl-2-(9Z-octadecenoyl)-sn-glycero-3-phospho-(1'-sn-glycerol) + N-(acetyl)-sphing-4-enine = 1-octadecanoyl-sn-glycero-3-phospho-(1'-sn-glycerol) + 1-(9Z-octadecenoyl)-N-(acetyl)-sphing-4-enine. It carries out the reaction an N-acylethanolamine + a 1,2-diacyl-sn-glycero-3-phosphocholine = 2-(acylamino)ethyl fatty acid + a 2-acyl-sn-glycero-3-phosphocholine. It catalyses the reaction an N-acylethanolamine + a 1,2-diacyl-sn-glycero-3-phosphocholine = 2-(acylamino)ethyl fatty acid + a 1-acyl-sn-glycero-3-phosphocholine. The enzyme catalyses N-(5Z,8Z,11Z,14Z-eicosatetraenoyl)-ethanolamine + 1,2-di-(9Z-octadecenoyl)-sn-glycero-3-phosphocholine = 2-[(5Z,8Z,11Z,14Z)-eicosatetraenoylamino]ethyl (9Z)-octadecenoate + (9Z-octadecenoyl)-sn-glycero-3-phosphocholine. The catalysed reaction is N-(9Z-octadecenoyl) ethanolamine + 1,2-di-(9Z-octadecenoyl)-sn-glycero-3-phosphocholine = 2-[(9Z)-octadecenoylamino]ethyl (9Z)-octadecenoate + (9Z-octadecenoyl)-sn-glycero-3-phosphocholine. It carries out the reaction a 3-acyl-sn-glycerol + a 1,2-diacyl-sn-glycero-3-phosphocholine = a 1,3-diacylglycerol + a 1-acyl-sn-glycero-3-phosphocholine. It catalyses the reaction a 3-acyl-sn-glycerol + a 1,2-diacyl-sn-glycero-3-phosphocholine = a 1,3-diacylglycerol + a 2-acyl-sn-glycero-3-phosphocholine. The enzyme catalyses 3-(9Z-octadecenoyl)-sn-glycerol + 1,2-di-(9Z-octadecenoyl)-sn-glycero-3-phosphocholine = 1,3-di-(9Z-octadecenoyl)-glycerol + (9Z-octadecenoyl)-sn-glycero-3-phosphocholine. The catalysed reaction is 3-hexadecanoyl-sn-glycerol + 1,2-di-(9Z-octadecenoyl)-sn-glycero-3-phosphocholine = 1-(9Z)-octadecenoyl-3-hexadecanoyl-sn-glycerol + (9Z-octadecenoyl)-sn-glycero-3-phosphocholine. It carries out the reaction a 1-acyl-sn-glycerol + a 1,2-diacyl-sn-glycero-3-phosphocholine = a 1,3-diacylglycerol + a 2-acyl-sn-glycero-3-phosphocholine. It catalyses the reaction a 1-acyl-sn-glycerol + a 1,2-diacyl-sn-glycero-3-phosphocholine = a 1,3-diacylglycerol + a 1-acyl-sn-glycero-3-phosphocholine. The enzyme catalyses 1-(9Z-octadecenoyl)-sn-glycerol + 1,2-di-(9Z-octadecenoyl)-sn-glycero-3-phosphocholine = 1,3-di-(9Z-octadecenoyl)-glycerol + (9Z-octadecenoyl)-sn-glycero-3-phosphocholine. The catalysed reaction is 1-hexadecanoyl-sn-glycerol + 1,2-di-(9Z-octadecenoyl)-sn-glycero-3-phosphocholine = 1-hexadecanoyl-3-(9Z)-octadecenoyl-sn-glycerol + (9Z-octadecenoyl)-sn-glycero-3-phosphocholine. It carries out the reaction a 2-acylglycerol + a 1,2-diacyl-sn-glycero-3-phosphocholine = a 1,2-diacylglycerol + a 2-acyl-sn-glycero-3-phosphocholine. It catalyses the reaction a 2-acylglycerol + a 1,2-diacyl-sn-glycero-3-phosphocholine = a 1,2-diacylglycerol + a 1-acyl-sn-glycero-3-phosphocholine. The enzyme catalyses 2-hexadecanoylglycerol + 1,2-di-(9Z-octadecenoyl)-sn-glycero-3-phosphocholine = 1-(9Z)-octadecenoyl-2-hexadecanoylglycerol + (9Z-octadecenoyl)-sn-glycero-3-phosphocholine. The catalysed reaction is 1-O-alkylglycerol + a 1,2-diacyl-sn-glycero-3-phosphocholine = 1-O-alkyl-3-acylglycerol + a 1-acyl-sn-glycero-3-phosphocholine. It carries out the reaction 1-O-alkylglycerol + a 1,2-diacyl-sn-glycero-3-phosphocholine = 1-O-alkyl-3-acylglycerol + a 2-acyl-sn-glycero-3-phosphocholine. It catalyses the reaction 1-O-hexadecylglycerol + 1,2-di-(9Z-octadecenoyl)-sn-glycero-3-phosphocholine = 1-O-hexadecyl-3-(9Z)-octadecenoylglycerol + (9Z-octadecenoyl)-sn-glycero-3-phosphocholine. The enzyme catalyses 1-O-alkyl-2-acyl-sn-glycerol + a 1,2-diacyl-sn-glycero-3-phosphocholine = 1-O-alkyl-2,3-diacyl-sn-glycerol + a 2-acyl-sn-glycero-3-phosphocholine. The catalysed reaction is 1-O-alkyl-2-acyl-sn-glycerol + a 1,2-diacyl-sn-glycero-3-phosphocholine = 1-O-alkyl-2,3-diacyl-sn-glycerol + a 1-acyl-sn-glycero-3-phosphocholine. It carries out the reaction 1-O-hexadecyl-2-acetyl-sn-glycerol + 1,2-di-(9Z-octadecenoyl)-sn-glycero-3-phosphocholine = 1-O-hexadecyl-2-acetyl-3-(9Z)-octadecenoyl-sn-glycerol + (9Z-octadecenoyl)-sn-glycero-3-phosphocholine. It catalyses the reaction 1-O-hexadecyl-2-O-methyl-sn-glycerol + 1,2-di-(9Z-octadecenoyl)-sn-glycero-3-phosphocholine = 1-O-hexadecyl-2-O-methyl-3-(9Z)-octadecenoyl-sn-glycerol + (9Z-octadecenoyl)-sn-glycero-3-phosphocholine. The enzyme catalyses a 1,2-diacyl-sn-glycero-3-phosphoethanolamine + H2O = a 1-acyl-sn-glycero-3-phosphoethanolamine + a fatty acid + H(+). The catalysed reaction is 1-acyl-2-(5Z,8Z,11Z,14Z)-eicosatetraenoyl-sn-glycero-3-phosphoethanolamine + H2O = a 1-acyl-sn-glycero-3-phosphoethanolamine + (5Z,8Z,11Z,14Z)-eicosatetraenoate + H(+). It carries out the reaction a 1,2-diacyl-sn-glycero-3-phospho-(1'-sn-glycerol) + H2O = 1-acyl-sn-glycero-3-phospho-(1'-sn-glycerol) + a fatty acid + H(+). It catalyses the reaction 1-hexadecanoyl-2-(9Z-octadecenoyl)-sn-glycero-3-phospho-(1'-sn-glycerol) + H2O = 1-hexadecanoyl-sn-glycero-3-phospho-(1'-sn-glycerol) + (9Z)-octadecenoate + H(+). The enzyme catalyses a 1,2-diacyl-sn-glycero-3-phospho-(1'-sn-glycerol) + H2O = 2-acyl-sn-glycero-3-phospho-(1'-sn-glycerol) + a fatty acid + H(+). The catalysed reaction is 1-hexadecanoyl-2-(9Z-octadecenoyl)-sn-glycero-3-phospho-(1'-sn-glycerol) + H2O = 2-(9Z-octadecenoyl)-sn-glycero-3-phospho-(1'-sn-glycerol) + hexadecanoate + H(+). Has dual calcium-independent phospholipase and O-acyltransferase activities with a potential role in glycerophospholipid homeostasis and remodeling of acyl groups of lipophilic alcohols present in acidic cellular compartments. Catalyzes hydrolysis of the ester bond of the fatty acyl group attached at sn-1 or sn-2 position of phospholipids (phospholipase A1 or A2 activity) and transfer it to the hydroxyl group at the first carbon of lipophilic alcohols (O-acyltransferase activity). Among preferred fatty acyl donors are phosphatidylcholines, phosphatidylethanolamines, phosphatidylglycerols and phosphatidylserines. Favors sn-2 over sn-1 deacylation of unsaturated fatty acyl groups of phosphatidylcholines, phosphatidylethanolamines, and phosphatidylglycerols. Among preferred fatty acyl acceptors are natural lipophilic alcohols including short-chain ceramide N-acetyl-sphingosine (C2 ceramide), alkylacylglycerols, monoacylglycerols, and acylethanolamides such as anandamide and oleoylethanolamide. Selectively hydrolyzes the sn-1 fatty acyl group of truncated oxidized phospholipids and may play a role in detoxification of reactive oxidized phospholipids during oxidative stress. Required for normal phospholipid degradation in alveolar macrophages with potential implications in the clearance of pulmonary surfactant, which is mainly composed of dipalmitoylphosphatidylcholine (1,2-dihexadecanoyl-sn-glycero-3-phosphocholine). Involved in the first step of bis(monoacylglycero)phosphate (BMP) de novo synthesis from phosphatidylglycerol (1,2-diacyl-sn-glycero-3-phospho-(1'-sn-glycerol), PG). BMP is an important player in cargo sorting and degradation, regulation of cellular cholesterol levels and intercellular communication. At neutral pH, hydrolyzes the sn-1 fatty acyl group of the lysophosphatidylcholines. This Canis lupus familiaris (Dog) protein is Lysosomal phospholipase A and acyltransferase (PLA2G15).